Here is a 306-residue protein sequence, read N- to C-terminus: tRNA pseudouridine synthase B (306 aa).

Catalysis depends on D43, which acts as the Nucleophile.

This sequence belongs to the pseudouridine synthase TruB family. Type 1 subfamily.

The catalysed reaction is uridine(55) in tRNA = pseudouridine(55) in tRNA. Functionally, responsible for synthesis of pseudouridine from uracil-55 in the psi GC loop of transfer RNAs. In Lacticaseibacillus casei (strain BL23) (Lactobacillus casei), this protein is tRNA pseudouridine synthase B.